The chain runs to 197 residues: Protein GrpE (197 aa).

The tract at residues 1–43 is disordered; it reads MSSKEQKTPDGQAPEEIVTEQHEEVESVESAESAEQVDPRDEE.

It belongs to the GrpE family. In terms of assembly, homodimer.

It localises to the cytoplasm. Participates actively in the response to hyperosmotic and heat shock by preventing the aggregation of stress-denatured proteins, in association with DnaK and GrpE. It is the nucleotide exchange factor for DnaK and may function as a thermosensor. Unfolded proteins bind initially to DnaJ; upon interaction with the DnaJ-bound protein, DnaK hydrolyzes its bound ATP, resulting in the formation of a stable complex. GrpE releases ADP from DnaK; ATP binding to DnaK triggers the release of the substrate protein, thus completing the reaction cycle. Several rounds of ATP-dependent interactions between DnaJ, DnaK and GrpE are required for fully efficient folding. The chain is Protein GrpE from Cronobacter sakazakii (strain ATCC BAA-894) (Enterobacter sakazakii).